A 918-amino-acid chain; its full sequence is Signal transduction histidine-protein kinase BarA (918 aa).

The Cytoplasmic segment spans residues 1-9 (MTNYSLRAR). Residues 10 to 31 (MMILILAPTVLIGLLLSIFFVV) traverse the membrane as a helical segment. Residues 32–176 (HRYNDLQRQL…KSVRLQQYKE (145 aa)) are Periplasmic-facing. The chain crosses the membrane as a helical span at residues 177–196 (IFISSVMMLFCIGIALIFGW). Topologically, residues 197-918 (RLMRDVTGPI…VAREASKILG (722 aa)) are cytoplasmic. One can recognise an HAMP domain in the interval 200 to 252 (RDVTGPIRNMVNTVDRIRRGQLDSRVEGFMLGELDMLKNGINSMAMSLAAYHE). In terms of domain architecture, Histidine kinase spans 299-520 (NMSHELRTPL…TFWFHINLDL (222 aa)). Histidine 302 bears the Phosphohistidine; by autocatalysis mark. Positions 669–785 (TVMAVDDNPA…RLHNLLLRYK (117 aa)) constitute a Response regulatory domain. At aspartate 718 the chain carries 4-aspartylphosphate. The HPt domain maps to 822–918 (KTDLARDMLQ…VAREASKILG (97 aa)). The residue at position 861 (histidine 861) is a Phosphohistidine.

Activation requires a sequential transfer of a phosphate group from a His in the primary transmitter domain, to an Asp in the receiver domain and to a His in the secondary transmitter domain.

The protein resides in the cell inner membrane. The catalysed reaction is ATP + protein L-histidine = ADP + protein N-phospho-L-histidine.. Functionally, member of the two-component regulatory system UvrY/BarA involved in the regulation of carbon metabolism via the CsrA/CsrB regulatory system. Phosphorylates UvrY, probably via a four-step phosphorelay. In Escherichia coli O157:H7, this protein is Signal transduction histidine-protein kinase BarA (barA).